The following is a 427-amino-acid chain: O-methyltransferase FrzF (427 aa).

An S-adenosyl-L-methionine-binding site is contributed by Asp281. Residue His327 is the Proton acceptor of the active site.

Belongs to the class I-like SAM-binding methyltransferase superfamily. Cation-independent O-methyltransferase family. As to quaternary structure, homodimer.

The catalysed reaction is (1S,4S)-4-[(4-hydroxyphenyl)methyl]-2,5-diazaspiro[bicyclo[3.2.1]octane-6,1'-cyclohexan]-4'-one + S-adenosyl-L-methionine = (1S,4S)-4-[(4-methoxyphenyl)methyl]-2,5-diazaspiro[bicyclo[3.2.1]octane-6,1'-cyclohexan]-4'-one + S-adenosyl-L-homocysteine + H(+). It catalyses the reaction (1S,4S)-4-[(4-hydroxyphenyl)methyl]-2-methyl-2,5-diazaspiro[bicyclo[3.2.1]octane-6,1'-cyclohexan]-4'-one + S-adenosyl-L-methionine = (1S,4S)-4-[(4-methoxyphenyl)methyl]-2-methyl-2,5-diazaspiro[bicyclo[3.2.1]octane-6,1'-cyclohexan]-4'-one + S-adenosyl-L-homocysteine + H(+). It participates in secondary metabolite biosynthesis. O-methyltransferase; part of the gene cluster that mediates the biosynthesis of the alkaloid (-)-FR901483, a potent immunosuppressant that shows efficacy in animal models and a probable inhibitor of purine nucleotide biosynthesis by targeting phosphoribosylpyrophosphate amidotransferase (PPAT). Within the pathway, FrzF methylates the phenolic oxygen at position C4. The biosynthesis of (-)-FR901483 starts with the condensation of two L-tyrosines to yield (S,S)-dityrosyl-piperazine. This process occurs in 3 steps with the non-canonical nonribosomal peptide synthetase FrzA catalyzing the reduction of L-tyrosine into L-tyrosinal, the spontaneous condensation of 2 L-tyrosinal units, and the subsequent reduction by the NmrA-like family domain-containing oxidoreductase FrzB. The cytochrome P450 monooxygenase FrzC then performs coupling between N10 and C1' to morph the piperazine into a 1,4-diazabicyclo[3.2.1]octane spiro-fused to a 2,5-cyclohexadienone. The dienone portion is further reduced to cyclohexanone by the flavin-dependent reductase FrzD. The methyltranserases (MTs) FrzE and FrzF are then involved in the methylation at the C10' amine and the C4 phenolic oxygen, respectively. The order of the two MTs appear to be interchangeable. Cleavage of the C9-N10' bond by the dioxygenase FrzG then leads to formation of a conjugated iminium. In addition to the oxidation of C9, an additional dehydrogenation between C7 and C8 can occur to give a likely shunt product. The next biosynthetic step is the intramolecular aldol condensation catalyzed by the newly identified aldolase FrzH to yield an aza-tricyclic product with the formation of a C9-C3' bond. The short-chain dehydrogenase/reductase FrzI then produces dephospho-(-)-FR901483 that is phosphorylated at C4'-OH into (-)-FR901483 by the phosphotransferase FrzJ. The sequence is that of O-methyltransferase FrzF from Cladobotryum sp.